A 783-amino-acid polypeptide reads, in one-letter code: Protein SCARECROW (783 aa).

Residues 298 to 387 (QPQSQDAITH…QSPPASENTA (90 aa)) are disordered. 2 stretches are compositionally biased toward low complexity: residues 342–353 (PSSLPFVPVPSS) and 372–384 (ESQS…PASE). Positions 387-418 (AAAALIRTESIMRREKEELEQQKKDEEGLHLL) form a coiled coil. Residues 408-777 (QKKDEEGLHL…LCLLTASAWR (370 aa)) form the GRAS domain. The leucine repeat I (LRI) stretch occupies residues 415-478 (LHLLTLLLQC…LVNSCLGIYA (64 aa)). The short motif at 422–426 (LQCAE) is the LxCxE motif element. The interval 497–562 (FQVFNGISPF…GGPPLVRLTG (66 aa)) is VHIID. Positions 528 to 532 (VHIID) match the VHIID motif. Residues 572-604 (ATGKRLSDFAQKLGLPFEFFPVADKVGNLDPQR) are leucine repeat II (LRII). The tract at residues 613-700 (VAVHWLQHSL…QQLLSREIRN (88 aa)) is PFYRE. The interval 703–777 (AVGGPSRSGE…LCLLTASAWR (75 aa)) is SAW.

It belongs to the GRAS family.

The protein resides in the nucleus. Putative transcription factor involved in asymmetric cell division. Required for differentiation of endodermis and graviresponses. This Ipomoea nil (Japanese morning glory) protein is Protein SCARECROW (SCR).